The chain runs to 257 residues: Diaminopimelate epimerase (257 aa).

3 residues coordinate substrate: Asn-13, Gln-46, and Asn-66. Catalysis depends on Cys-75, which acts as the Proton donor. Substrate is bound by residues Gly-76–Asn-77, Asn-145, Asn-175, and Glu-193–Arg-194. Cys-202 (proton acceptor) is an active-site residue. Position 203–204 (Gly-203–Ser-204) interacts with substrate.

It belongs to the diaminopimelate epimerase family. Homodimer.

Its subcellular location is the cytoplasm. The enzyme catalyses (2S,6S)-2,6-diaminopimelate = meso-2,6-diaminopimelate. It participates in amino-acid biosynthesis; L-lysine biosynthesis via DAP pathway; DL-2,6-diaminopimelate from LL-2,6-diaminopimelate: step 1/1. Functionally, catalyzes the stereoinversion of LL-2,6-diaminopimelate (L,L-DAP) to meso-diaminopimelate (meso-DAP), a precursor of L-lysine and an essential component of the bacterial peptidoglycan. In Gluconobacter oxydans (strain 621H) (Gluconobacter suboxydans), this protein is Diaminopimelate epimerase.